A 368-amino-acid polypeptide reads, in one-letter code: Protein ALTERED XYLOGLUCAN 9 (368 aa).

Over 1-32 (MLGAIHLGVLAACFVLFVPMAMAGWHLSRNKM) the chain is Cytoplasmic. Residues 33 to 53 (LFFSGALFISLAVCVHLTPYF) form a helical membrane-spanning segment. Over 54–368 (PSVSDIVASV…ALLIESHQSL (315 aa)) the chain is Lumenal. N-linked (GlcNAc...) asparagine glycosylation is found at Asn-99, Asn-137, and Asn-235.

It is found in the golgi apparatus membrane. Its function is as follows. Component of the plant cell wall polysaccharide acetylation pathway. Does not directly catalyze O-acetylation of xyloglucan but exhibits weak acetylesterase activity in vitro. In Arabidopsis thaliana (Mouse-ear cress), this protein is Protein ALTERED XYLOGLUCAN 9.